Consider the following 345-residue polypeptide: KRR1 small subunit processome component homolog (345 aa).

The KH domain maps to 125 to 193 (DIIKIGNLVH…VRDIVLETMN (69 aa)). Over residues 232-245 (NISKRKQPKVKKQK) the composition is skewed to basic residues. 2 disordered regions span residues 232-260 (NISK…ESKV) and 273-329 (QEQK…VDVK). The stretch at 270–298 (FLNQEQKQAKRNQERTEKQKEAAKRQDER) forms a coiled coil. Basic and acidic residues-rich tracts occupy residues 276 to 302 (KQAK…RNKD) and 315 to 329 (LKKE…VDVK).

The protein belongs to the KRR1 family. As to quaternary structure, monomer. Component of the ribosomal small subunit (SSU) processome.

It localises to the nucleus. Its subcellular location is the nucleolus. In terms of biological role, required for 40S ribosome biogenesis. Involved in nucleolar processing of pre-18S ribosomal RNA and ribosome assembly. Binds to RNA. Required for female germline development, cell viability during eye development and for survival of dividing cells and epithelial cells during early wing disk development. This Drosophila erecta (Fruit fly) protein is KRR1 small subunit processome component homolog.